A 406-amino-acid chain; its full sequence is NADH-quinone oxidoreductase subunit D (406 aa).

This sequence belongs to the complex I 49 kDa subunit family. As to quaternary structure, NDH-1 is composed of 14 different subunits. Subunits NuoB, C, D, E, F, and G constitute the peripheral sector of the complex.

It is found in the cell inner membrane. The enzyme catalyses a quinone + NADH + 5 H(+)(in) = a quinol + NAD(+) + 4 H(+)(out). Functionally, NDH-1 shuttles electrons from NADH, via FMN and iron-sulfur (Fe-S) centers, to quinones in the respiratory chain. The immediate electron acceptor for the enzyme in this species is believed to be ubiquinone. Couples the redox reaction to proton translocation (for every two electrons transferred, four hydrogen ions are translocated across the cytoplasmic membrane), and thus conserves the redox energy in a proton gradient. In Rhizorhabdus wittichii (strain DSM 6014 / CCUG 31198 / JCM 15750 / NBRC 105917 / EY 4224 / RW1) (Sphingomonas wittichii), this protein is NADH-quinone oxidoreductase subunit D.